A 169-amino-acid polypeptide reads, in one-letter code: MAPSEDPRDWRANLKGTIRETGLETSSGGKLAGHQKTVPTAHLTFVIDCTHGKQLSLAATASPPQAPSPNRGLVTPPMKTYIVFCGENWPHLTRVTPMGGGCLAQARATLPLCRGSVASASFPVSPLCPQEVPEAKGKPVKAAPVRSSTWGTVKDSLKALSSCVCGQAD.

Interacts with 14-3-3 proteins. In terms of tissue distribution, expressed in breast tumors with a higher expression level in estrogen receptor-positive cancers.

Functionally, may regulate the transcriptional function of androgen and estrogen receptors. This Homo sapiens (Human) protein is Steroid receptor-associated and regulated protein.